A 560-amino-acid chain; its full sequence is Vanillyl-alcohol oxidase (560 aa).

The region spanning 67-272 (DYFLASAIVA…TKIGIWLMPN (206 aa)) is the FAD-binding PCMH-type domain. Tyr108 is an active-site residue. His422 carries the tele-8alpha-FAD histidine modification. Residues Tyr503 and Arg504 contribute to the active site.

It to bacterial flavocytochrome p-cresol methyl hydroxylase. In terms of assembly, homooctamer (tetramer of tightly interacting dimers). FAD serves as cofactor.

It is found in the peroxisome. The protein localises to the cytoplasm. The enzyme catalyses 4-hydroxy-3-methoxy-benzenemethanol + O2 = vanillin + H2O2. With respect to regulation, competitively inhibited by cinnamyl and coniferyl alcohols and by isoeugenol. Catalyzes the conversion of vanillin alcohol to vanillin, and also the conversion of a wide range of phenolic compounds bearing side chains of variable size at the para position of the aromatic ring. Crucial for the degradation of the secondary metabolites derived from the degradation of the lignin. Catalyzes besides the oxidation of 4-hydroxybenzyl alcohols, the oxidative deamination of 4-hydroxybenzylamines, the oxidative demethylation of 4-(methoxy-methyl)phenols and the oxidative hydration of 4-allylphenols. Most active with 4-allylphenols. In Penicillium simplicissimum, this protein is Vanillyl-alcohol oxidase (VAOA).